The primary structure comprises 303 residues: Acetylglutamate kinase (303 aa).

Substrate contacts are provided by residues 76–77 (GG), Arg98, and Asn199.

Belongs to the acetylglutamate kinase family. ArgB subfamily.

The protein localises to the cytoplasm. It catalyses the reaction N-acetyl-L-glutamate + ATP = N-acetyl-L-glutamyl 5-phosphate + ADP. Its pathway is amino-acid biosynthesis; L-arginine biosynthesis; N(2)-acetyl-L-ornithine from L-glutamate: step 2/4. Its function is as follows. Catalyzes the ATP-dependent phosphorylation of N-acetyl-L-glutamate. The protein is Acetylglutamate kinase of Clavibacter sepedonicus (Clavibacter michiganensis subsp. sepedonicus).